The following is a 234-amino-acid chain: Phosphoribosylaminoimidazole-succinocarboxamide synthase (234 aa).

Belongs to the SAICAR synthetase family.

It catalyses the reaction 5-amino-1-(5-phospho-D-ribosyl)imidazole-4-carboxylate + L-aspartate + ATP = (2S)-2-[5-amino-1-(5-phospho-beta-D-ribosyl)imidazole-4-carboxamido]succinate + ADP + phosphate + 2 H(+). It participates in purine metabolism; IMP biosynthesis via de novo pathway; 5-amino-1-(5-phospho-D-ribosyl)imidazole-4-carboxamide from 5-amino-1-(5-phospho-D-ribosyl)imidazole-4-carboxylate: step 1/2. The sequence is that of Phosphoribosylaminoimidazole-succinocarboxamide synthase from Staphylococcus carnosus (strain TM300).